Here is a 359-residue protein sequence, read N- to C-terminus: 4-hydroxy-3-methylbut-2-en-1-yl diphosphate synthase (flavodoxin) (359 aa).

Residues Cys265, Cys268, Cys300, and Glu307 each coordinate [4Fe-4S] cluster.

This sequence belongs to the IspG family. The cofactor is [4Fe-4S] cluster.

It catalyses the reaction (2E)-4-hydroxy-3-methylbut-2-enyl diphosphate + oxidized [flavodoxin] + H2O + 2 H(+) = 2-C-methyl-D-erythritol 2,4-cyclic diphosphate + reduced [flavodoxin]. It functions in the pathway isoprenoid biosynthesis; isopentenyl diphosphate biosynthesis via DXP pathway; isopentenyl diphosphate from 1-deoxy-D-xylulose 5-phosphate: step 5/6. Converts 2C-methyl-D-erythritol 2,4-cyclodiphosphate (ME-2,4cPP) into 1-hydroxy-2-methyl-2-(E)-butenyl 4-diphosphate. This is 4-hydroxy-3-methylbut-2-en-1-yl diphosphate synthase (flavodoxin) from Lawsonia intracellularis (strain PHE/MN1-00).